The chain runs to 698 residues: DNA ligase (698 aa).

NAD(+)-binding positions include 35-39, 84-85, and Glu-123; these read DSVYD and SL. Catalysis depends on Lys-125, which acts as the N6-AMP-lysine intermediate. Positions 146, 183, 302, and 326 each coordinate NAD(+). 4 residues coordinate Zn(2+): Cys-420, Cys-423, Cys-438, and Cys-443. A BRCT domain is found at 612-698; it reads NGKGHLNGQT…QNSADTIHLL (87 aa).

Belongs to the NAD-dependent DNA ligase family. LigA subfamily. Requires Mg(2+) as cofactor. It depends on Mn(2+) as a cofactor.

The enzyme catalyses NAD(+) + (deoxyribonucleotide)n-3'-hydroxyl + 5'-phospho-(deoxyribonucleotide)m = (deoxyribonucleotide)n+m + AMP + beta-nicotinamide D-nucleotide.. DNA ligase that catalyzes the formation of phosphodiester linkages between 5'-phosphoryl and 3'-hydroxyl groups in double-stranded DNA using NAD as a coenzyme and as the energy source for the reaction. It is essential for DNA replication and repair of damaged DNA. This is DNA ligase from Synechococcus sp. (strain WH7803).